Reading from the N-terminus, the 633-residue chain is UvrABC system protein C (633 aa).

The 79-residue stretch at 37–115 (PKPGVYRMFG…IKSLKPRFNI (79 aa)) folds into the GIY-YIG domain. The 36-residue stretch at 225–260 (NALREDLQTRMAQASEAMDFETAAKLRDRIRAIAAV) folds into the UVR domain.

The protein belongs to the UvrC family. In terms of assembly, interacts with UvrB in an incision complex.

The protein resides in the cytoplasm. Functionally, the UvrABC repair system catalyzes the recognition and processing of DNA lesions. UvrC both incises the 5' and 3' sides of the lesion. The N-terminal half is responsible for the 3' incision and the C-terminal half is responsible for the 5' incision. This chain is UvrABC system protein C, found in Maricaulis maris (strain MCS10) (Caulobacter maris).